The sequence spans 192 residues: Fe/S biogenesis protein NfuA (192 aa).

Residues C149 and C152 each contribute to the [4Fe-4S] cluster site.

The protein belongs to the NfuA family. As to quaternary structure, homodimer. Requires [4Fe-4S] cluster as cofactor.

Involved in iron-sulfur cluster biogenesis. Binds a 4Fe-4S cluster, can transfer this cluster to apoproteins, and thereby intervenes in the maturation of Fe/S proteins. Could also act as a scaffold/chaperone for damaged Fe/S proteins. The protein is Fe/S biogenesis protein NfuA of Proteus mirabilis (strain HI4320).